A 233-amino-acid polypeptide reads, in one-letter code: uncharacterized protein (233 aa).

3 consecutive transmembrane segments (helical) span residues 4–24 (LAIL…NHDT), 35–55 (FGQL…ILQS), and 66–86 (IAIW…RFEL).

The protein resides in the cell membrane. This is an uncharacterized protein from Sinorhizobium sp.